We begin with the raw amino-acid sequence, 401 residues long: Putative TRAP transporter large permease protein HI_0050 (401 aa).

11 consecutive transmembrane segments (helical) span residues 31 to 51 (FPLM…HGGI), 70 to 90 (LGYV…SAVA), 115 to 135 (GLIC…PMII), 144 to 164 (ITKL…GLWV), 193 to 213 (AFWP…GIFT), 217 to 237 (AGVV…GLTF), 253 to 273 (MVMF…VAQI), 290 to 310 (ILMF…DLIP), 330 to 350 (IAYF…TPPV), 353 to 373 (VLYV…KGIA), and 375 to 395 (FLFV…IVIV).

The protein belongs to the TRAP transporter large permease family.

It is found in the cell inner membrane. This is Putative TRAP transporter large permease protein HI_0050 from Haemophilus influenzae (strain ATCC 51907 / DSM 11121 / KW20 / Rd).